Consider the following 148-residue polypeptide: Thioredoxin H8 (148 aa).

The 145-residue stretch at 1–145 (MGANVSTPDQ…LERKLNKYTQ (145 aa)) folds into the Thioredoxin domain. Catalysis depends on nucleophile residues C71 and C74. A disulfide bond links C71 and C74.

Belongs to the thioredoxin family. Plant H-type subfamily.

The protein resides in the cytoplasm. In terms of biological role, probable thiol-disulfide oxidoreductase that may be involved in the redox regulation of a number of cytosolic enzymes. The sequence is that of Thioredoxin H8 (TRX8) from Arabidopsis thaliana (Mouse-ear cress).